The sequence spans 336 residues: HTH-type transcriptional regulator AscG (336 aa).

Positions 2-56 constitute an HTH lacI-type domain; the sequence is TTMLEVAKRAGVSKATVSRVLSGNGYVSQETKDRVFQAVEESGYRPNLLARNLSA. Residues 4–23 constitute a DNA-binding region (H-T-H motif); sequence MLEVAKRAGVSKATVSRVLS.

Functionally, repressor of the asc operon. The cryptic operon is activated by the insertion of IS186 into the ascG gene. This Escherichia coli (strain K12) protein is HTH-type transcriptional regulator AscG (ascG).